A 165-amino-acid polypeptide reads, in one-letter code: MASGVQVADEVCRIFYDMKVRKCSTPEEVKKRKKAVIFCLSPDKKCIIVEEGKEILVGDVGVTVTDPFKHFVEMLPEKDCRYALYDASFETKESKKEELMFFLWAPEQAPLKSKMIYASSKDAIKKKFQGIKHECQANGPEDLNRACIAEKLGGSLVVAFEGSPV.

Ala2 carries the post-translational modification N-acetylalanine. Residues 4 to 153 (GVQVADEVCR…NRACIAEKLG (150 aa)) form the ADF-H domain. The Nuclear localization signal signature appears at 30 to 34 (KKRKK).

It belongs to the actin-binding proteins ADF family.

Its function is as follows. Actin-depolymerizing protein. Severs actin filaments (F-actin) and binds to actin monomers (G-actin). Acts in a pH-independent manner. The protein is Destrin (DSTN) of Gallus gallus (Chicken).